Reading from the N-terminus, the 436-residue chain is GTPase Der (436 aa).

EngA-type G domains are found at residues P4–E167 and I176–N351. Residues G10 to S17, D57 to I61, N119 to D122, G182 to S189, D229 to M233, and N294 to D297 each bind GTP. In terms of domain architecture, KH-like spans I352–D436.

The protein belongs to the TRAFAC class TrmE-Era-EngA-EngB-Septin-like GTPase superfamily. EngA (Der) GTPase family. Associates with the 50S ribosomal subunit.

Its function is as follows. GTPase that plays an essential role in the late steps of ribosome biogenesis. The chain is GTPase Der from Bacillus cytotoxicus (strain DSM 22905 / CIP 110041 / 391-98 / NVH 391-98).